A 406-amino-acid polypeptide reads, in one-letter code: Glutamyl-tRNA reductase (406 aa).

Substrate contacts are provided by residues 50–53 (TCNR), Ser-107, 112–114 (EPQ), and Gln-118. Catalysis depends on Cys-51, which acts as the Nucleophile. 187–192 (GAGEMG) contributes to the NADP(+) binding site.

The protein belongs to the glutamyl-tRNA reductase family. As to quaternary structure, homodimer.

The enzyme catalyses (S)-4-amino-5-oxopentanoate + tRNA(Glu) + NADP(+) = L-glutamyl-tRNA(Glu) + NADPH + H(+). Its pathway is porphyrin-containing compound metabolism; protoporphyrin-IX biosynthesis; 5-aminolevulinate from L-glutamyl-tRNA(Glu): step 1/2. In terms of biological role, catalyzes the NADPH-dependent reduction of glutamyl-tRNA(Glu) to glutamate 1-semialdehyde (GSA). This is Glutamyl-tRNA reductase from Aquifex aeolicus (strain VF5).